Consider the following 387-residue polypeptide: UDP-N-acetylglucosamine--N-acetylmuramyl-(pentapeptide) pyrophosphoryl-undecaprenol N-acetylglucosamine transferase (387 aa).

Residues 14 to 16 (TGG), Asn124, Arg167, Ser195, and Gln296 contribute to the UDP-N-acetyl-alpha-D-glucosamine site. The segment at 366 to 387 (LPQQNSIEEDSTFEKNQEGAVA) is disordered. Residues 377–387 (TFEKNQEGAVA) show a composition bias toward basic and acidic residues.

The protein belongs to the glycosyltransferase 28 family. MurG subfamily.

It is found in the cell inner membrane. It carries out the reaction di-trans,octa-cis-undecaprenyl diphospho-N-acetyl-alpha-D-muramoyl-L-alanyl-D-glutamyl-meso-2,6-diaminopimeloyl-D-alanyl-D-alanine + UDP-N-acetyl-alpha-D-glucosamine = di-trans,octa-cis-undecaprenyl diphospho-[N-acetyl-alpha-D-glucosaminyl-(1-&gt;4)]-N-acetyl-alpha-D-muramoyl-L-alanyl-D-glutamyl-meso-2,6-diaminopimeloyl-D-alanyl-D-alanine + UDP + H(+). It participates in cell wall biogenesis; peptidoglycan biosynthesis. Functionally, cell wall formation. Catalyzes the transfer of a GlcNAc subunit on undecaprenyl-pyrophosphoryl-MurNAc-pentapeptide (lipid intermediate I) to form undecaprenyl-pyrophosphoryl-MurNAc-(pentapeptide)GlcNAc (lipid intermediate II). This is UDP-N-acetylglucosamine--N-acetylmuramyl-(pentapeptide) pyrophosphoryl-undecaprenol N-acetylglucosamine transferase from Zymomonas mobilis subsp. mobilis (strain ATCC 31821 / ZM4 / CP4).